We begin with the raw amino-acid sequence, 89 residues long: Mitochondrial import inner membrane translocase subunit Tim9 (89 aa).

A2 bears the N-acetylalanine mark. Positions C28–C52 match the Twin CX3C motif motif. Cystine bridges form between C28/C52 and C32/C48.

The protein belongs to the small Tim family. In terms of assembly, heterohexamer; composed of 3 copies of TIMM9 and 3 copies of TIMM10/TIM10A, named soluble 70 kDa complex. The complex forms a 6-bladed alpha-propeller structure and associates with the TIMM22 component of the TIM22 complex. Interacts with multi-pass transmembrane proteins in transit. Also forms a complex composed of TIMM9, TIMM10/TIM10A and FXC1/TIM10B. As to expression, ubiquitous, with highest expression in heart, kidney, liver and skeletal muscle.

It localises to the mitochondrion inner membrane. Mitochondrial intermembrane chaperone that participates in the import and insertion of multi-pass transmembrane proteins into the mitochondrial inner membrane. May also be required for the transfer of beta-barrel precursors from the TOM complex to the sorting and assembly machinery (SAM complex) of the outer membrane. Acts as a chaperone-like protein that protects the hydrophobic precursors from aggregation and guide them through the mitochondrial intermembrane space. The sequence is that of Mitochondrial import inner membrane translocase subunit Tim9 (TIMM9) from Homo sapiens (Human).